Consider the following 186-residue polypeptide: Peptidyl-tRNA hydrolase (186 aa).

A tRNA-binding site is contributed by tyrosine 14. Histidine 19 (proton acceptor) is an active-site residue. Phenylalanine 64, asparagine 66, and asparagine 112 together coordinate tRNA.

This sequence belongs to the PTH family. As to quaternary structure, monomer.

The protein resides in the cytoplasm. It catalyses the reaction an N-acyl-L-alpha-aminoacyl-tRNA + H2O = an N-acyl-L-amino acid + a tRNA + H(+). Functionally, hydrolyzes ribosome-free peptidyl-tRNAs (with 1 or more amino acids incorporated), which drop off the ribosome during protein synthesis, or as a result of ribosome stalling. Its function is as follows. Catalyzes the release of premature peptidyl moieties from peptidyl-tRNA molecules trapped in stalled 50S ribosomal subunits, and thus maintains levels of free tRNAs and 50S ribosomes. The protein is Peptidyl-tRNA hydrolase of Mycoplasma capricolum subsp. capricolum (strain California kid / ATCC 27343 / NCTC 10154).